Consider the following 250-residue polypeptide: Purine nucleoside phosphorylase BQ2027_MB2173C (250 aa).

Residues histidine 77, cysteine 114, and histidine 131 each coordinate Zn(2+).

The protein belongs to the purine nucleoside phosphorylase YfiH/LACC1 family. As to quaternary structure, homodimer. The cofactor is Cu(2+). Zn(2+) serves as cofactor.

The enzyme catalyses adenosine + phosphate = alpha-D-ribose 1-phosphate + adenine. It catalyses the reaction S-methyl-5'-thioadenosine + phosphate = 5-(methylsulfanyl)-alpha-D-ribose 1-phosphate + adenine. It carries out the reaction inosine + phosphate = alpha-D-ribose 1-phosphate + hypoxanthine. The catalysed reaction is adenosine + H2O + H(+) = inosine + NH4(+). In terms of biological role, purine nucleoside enzyme that catalyzes the phosphorolysis of adenosine and inosine nucleosides, yielding D-ribose 1-phosphate and the respective free bases, adenine and hypoxanthine. Also catalyzes the phosphorolysis of S-methyl-5'-thioadenosine into adenine and S-methyl-5-thio-alpha-D-ribose 1-phosphate. Also has adenosine deaminase activity. This chain is Purine nucleoside phosphorylase BQ2027_MB2173C, found in Mycobacterium bovis (strain ATCC BAA-935 / AF2122/97).